The following is a 357-amino-acid chain: Isopentenyl-diphosphate delta-isomerase (357 aa).

Position 12–13 (12–13 (RK)) interacts with substrate. FMN is bound by residues Ser70, 71 to 73 (SMT), Ser101, and Asn130. 101-103 (SMR) provides a ligand contact to substrate. Position 165 (Gln165) interacts with substrate. Glu166 serves as a coordination point for Mg(2+). FMN contacts are provided by residues Lys197 and 310-311 (AR).

Belongs to the IPP isomerase type 2 family. Homooctamer. Dimer of tetramers. FMN is required as a cofactor. Requires NADPH as cofactor. It depends on Mg(2+) as a cofactor.

The protein resides in the cytoplasm. It catalyses the reaction isopentenyl diphosphate = dimethylallyl diphosphate. Functionally, involved in the biosynthesis of isoprenoids. Catalyzes the 1,3-allylic rearrangement of the homoallylic substrate isopentenyl (IPP) to its allylic isomer, dimethylallyl diphosphate (DMAPP). This is Isopentenyl-diphosphate delta-isomerase from Pelodictyon phaeoclathratiforme (strain DSM 5477 / BU-1).